The primary structure comprises 556 residues: Formate--tetrahydrofolate ligase 1 (556 aa).

Residue 65 to 72 (TPAGEGKS) participates in ATP binding.

It belongs to the formate--tetrahydrofolate ligase family.

The catalysed reaction is (6S)-5,6,7,8-tetrahydrofolate + formate + ATP = (6R)-10-formyltetrahydrofolate + ADP + phosphate. It functions in the pathway one-carbon metabolism; tetrahydrofolate interconversion. This Streptococcus pyogenes serotype M2 (strain MGAS10270) protein is Formate--tetrahydrofolate ligase 1.